Reading from the N-terminus, the 337-residue chain is Inositol 2-dehydrogenase (337 aa).

Belongs to the Gfo/Idh/MocA family. Homotetramer.

The catalysed reaction is myo-inositol + NAD(+) = scyllo-inosose + NADH + H(+). Its function is as follows. Involved in the oxidation of myo-inositol (MI) to 2-keto-myo-inositol (2KMI or 2-inosose). The polypeptide is Inositol 2-dehydrogenase (Burkholderia lata (strain ATCC 17760 / DSM 23089 / LMG 22485 / NCIMB 9086 / R18194 / 383)).